Reading from the N-terminus, the 100-residue chain is Protein Tat (100 aa).

The interval 1 to 24 is interaction with human CREBBP; that stretch reads MDPIDPDLEPWKHPGSQPRTVCNN. Residues 1-48 are transactivation; that stretch reads MDPIDPDLEPWKHPGSQPRTVCNNCYCKACCYHCIYCFTKKGLGISYG. Residues cysteine 22, cysteine 25, and cysteine 27 each coordinate Zn(2+). The cysteine-rich stretch occupies residues 22-37; the sequence is CNNCYCKACCYHCIYC. Lysine 28 carries the N6-acetyllysine; by host PCAF modification. Residues cysteine 30, histidine 33, cysteine 34, and cysteine 37 each contribute to the Zn(2+) site. The tract at residues 38–48 is core; sequence FTKKGLGISYG. A compositionally biased stretch (basic residues) spans 48–58; it reads GRKKRTTRRRT. The segment at 48-100 is disordered; it reads GRKKRTTRRRTAPAGSKNNQDSIPKQPLSQSRGNKEGSEKSTKEVASKTEADQ. The Nuclear localization signal, RNA-binding (TAR), and protein transduction motif lies at 49-57; sequence RKKRTTRRR. An interaction with the host capping enzyme RNGTT region spans residues 49–87; it reads RKKRTTRRRTAPAGSKNNQDSIPKQPLSQSRGNKEGSEK. Lysine 50 and lysine 51 each carry N6-acetyllysine; by host EP300 and GCN5L2. At arginine 52 the chain carries Asymmetric dimethylarginine; by host PRMT6. The segment covering 63-79 has biased composition (polar residues); the sequence is SKNNQDSIPKQPLSQSR. Residue lysine 72 forms a Glycyl lysine isopeptide (Lys-Gly) (interchain with G-Cter in ubiquitin) linkage. A compositionally biased stretch (basic and acidic residues) spans 80–100; that stretch reads GNKEGSEKSTKEVASKTEADQ.

Belongs to the lentiviruses Tat family. In terms of assembly, interacts with host CCNT1. Associates with the P-TEFb complex composed at least of Tat, P-TEFb (CDK9 and CCNT1), TAR RNA, RNA Pol II. Recruits the HATs CREBBP, TAF1/TFIID, EP300, PCAF and GCN5L2. Interacts with host KAT5/Tip60; this interaction targets the latter to degradation. Interacts with the host deacetylase SIRT1. Interacts with host capping enzyme RNGTT; this interaction stimulates RNGTT. Binds to host KDR, and to the host integrins ITGAV/ITGB3 and ITGA5/ITGB1. Interacts with host KPNB1/importin beta-1 without previous binding to KPNA1/importin alpha-1. Interacts with EIF2AK2. Interacts with host nucleosome assembly protein NAP1L1; this interaction may be required for the transport of Tat within the nucleus, since the two proteins interact at the nuclear rim. Interacts with host C1QBP/SF2P32; this interaction involves lysine-acetylated Tat. Interacts with the host chemokine receptors CCR2, CCR3 and CXCR4. Interacts with host DPP4/CD26; this interaction may trigger an anti-proliferative effect. Interacts with host LDLR. Interacts with the host extracellular matrix metalloproteinase MMP1. Interacts with host PRMT6; this interaction mediates Tat's methylation. Interacts with, and is ubiquitinated by MDM2/Hdm2. Interacts with host PSMC3 and HTATIP2. Interacts with STAB1; this interaction may overcome SATB1-mediated repression of IL2 and IL2RA (interleukin) in T cells by binding to the same domain than HDAC1. Interacts (when acetylated) with human CDK13, thereby increasing HIV-1 mRNA splicing and promoting the production of the doubly spliced HIV-1 protein Nef. Interacts with host TBP; this interaction modulates the activity of transcriptional pre-initiation complex. Interacts with host RELA. In terms of processing, asymmetrical arginine methylation by host PRMT6 seems to diminish the transactivation capacity of Tat and affects the interaction with host CCNT1. Post-translationally, acetylation by EP300, CREBBP, GCN5L2/GCN5 and PCAF regulates the transactivation activity of Tat. EP300-mediated acetylation of Lys-50 promotes dissociation of Tat from the TAR RNA through the competitive binding to PCAF's bromodomain. In addition, the non-acetylated Tat's N-terminus can also interact with PCAF. PCAF-mediated acetylation of Lys-28 enhances Tat's binding to CCNT1. Lys-50 is deacetylated by SIRT1. Polyubiquitination by host MDM2 does not target Tat to degradation, but activates its transactivation function and fosters interaction with CCNT1 and TAR RNA. In terms of processing, phosphorylated by EIF2AK2 on serine and threonine residues adjacent to the basic region important for TAR RNA binding and function. Phosphorylation of Tat by EIF2AK2 is dependent on the prior activation of EIF2AK2 by dsRNA.

It localises to the host nucleus. It is found in the host nucleolus. Its subcellular location is the host cytoplasm. The protein resides in the secreted. Functionally, transcriptional activator that increases RNA Pol II processivity, thereby increasing the level of full-length viral transcripts. Recognizes a hairpin structure at the 5'-LTR of the nascent viral mRNAs referred to as the transactivation responsive RNA element (TAR) and recruits the cyclin T1-CDK9 complex (P-TEFb complex) that will in turn hyperphosphorylate the RNA polymerase II to allow efficient elongation. The CDK9 component of P-TEFb and other Tat-activated kinases hyperphosphorylate the C-terminus of RNA Pol II that becomes stabilized and much more processive. Other factors such as HTATSF1/Tat-SF1, SUPT5H/SPT5, and HTATIP2 are also important for Tat's function. Besides its effect on RNA Pol II processivity, Tat induces chromatin remodeling of proviral genes by recruiting the histone acetyltransferases (HATs) CREBBP, EP300 and PCAF to the chromatin. This also contributes to the increase in proviral transcription rate, especially when the provirus integrates in transcriptionally silent region of the host genome. To ensure maximal activation of the LTR, Tat mediates nuclear translocation of NF-kappa-B by interacting with host RELA. Through its interaction with host TBP, Tat may also modulate transcription initiation. Tat can reactivate a latently infected cell by penetrating in it and transactivating its LTR promoter. In the cytoplasm, Tat is thought to act as a translational activator of HIV-1 mRNAs. Extracellular circulating Tat can be endocytosed by surrounding uninfected cells via the binding to several surface receptors such as CD26, CXCR4, heparan sulfate proteoglycans (HSPG) or LDLR. Neurons are rarely infected, but they internalize Tat via their LDLR. Through its interaction with nuclear HATs, Tat is potentially able to control the acetylation-dependent cellular gene expression. Modulates the expression of many cellular genes involved in cell survival, proliferation or in coding for cytokines or cytokine receptors. Tat plays a role in T-cell and neurons apoptosis. Tat induced neurotoxicity and apoptosis probably contribute to neuroAIDS. Circulating Tat also acts as a chemokine-like and/or growth factor-like molecule that binds to specific receptors on the surface of the cells, affecting many cellular pathways. In the vascular system, Tat binds to ITGAV/ITGB3 and ITGA5/ITGB1 integrins dimers at the surface of endothelial cells and competes with bFGF for heparin-binding sites, leading to an excess of soluble bFGF. This is Protein Tat from Pan (chimpanzees).